We begin with the raw amino-acid sequence, 339 residues long: NmrA-like family domain-containing oxidoreductase notA (339 aa).

Residues 13–18 (GATGAQ), 39–43 (RKPDS), 60–61 (DG), 81–83 (TNS), K140, and 164–167 (YMGI) each bind NADP(+).

It belongs to the NmrA-type oxidoreductase family.

NmrA-like family domain-containing oxidoreductase; part of the gene cluster that mediates the biosynthesis of notoamide, a fungal indole alkaloid that belongs to a family of natural products containing a characteristic bicyclo[2.2.2]diazaoctane core. The first step of notoamide biosynthesis involves coupling of L-proline and L-tryptophan by the bimodular NRPS notE, to produce cyclo-L-tryptophan-L-proline called brevianamide F. The reverse prenyltransferase notF then acts as a deoxybrevianamide E synthase and converts brevianamide F to deoxybrevianamide E via reverse prenylation at C-2 of the indole ring leading to the bicyclo[2.2.2]diazaoctane core. Deoxybrevianamide E is further hydroxylated at C-6 of the indole ring, likely catalyzed by the cytochrome P450 monooxygenase notG, to yield 6-hydroxy-deoxybrevianamide E. 6-hydroxy-deoxybrevianamide E is a specific substrate of the prenyltransferase notC for normal prenylation at C-7 to produce 6-hydroxy-7-prenyl-deoxybrevianamide, also called notoamide S. As the proposed pivotal branching point in notoamide biosynthesis, notoamide S can be diverted to notoamide E through an oxidative pyran ring closure putatively catalyzed by either notH cytochrome P450 monooxygenase or the notD FAD-linked oxidoreductase. This step would be followed by an indole 2,3-epoxidation-initiated pinacol-like rearrangement catalyzed by the notB FAD-dependent monooxygenase leading to the formation of notoamide C and notoamide D. On the other hand notoamide S is converted to notoamide T by notH (or notD), a bifunctional oxidase that also functions as the intramolecular Diels-Alderase responsible for generation of (+)-notoamide T. To generate antipodal (-)-notoaminide T, notH' (or notD') in Aspergillus versicolor is expected to catalyze a Diels-Alder reaction leading to the opposite stereochemistry. The remaining oxidoreductase notD (or notH) likely catalyzes the oxidative pyran ring formation to yield (+)-stephacidin A. The FAD-dependent monooxygenase notI is highly similar to notB and is predicted to catalyze a similar conversion from (+)-stephacidin A to (-)-notoamide B via the 2,3-epoxidation of (+)-stephacidin A followed by a pinacol-type rearrangement. Finally, it remains unclear which enzyme could be responsible for the final hydroxylation steps leading to notoamide A and sclerotiamide. This Aspergillus sp. (strain MF297-2) protein is NmrA-like family domain-containing oxidoreductase notA.